The following is a 237-amino-acid chain: Concanavalin-A (237 aa).

Residues Glu8 and Asp10 each contribute to the Mn(2+) site. Residues Asp10, Tyr12, Asn14, and Asp19 each contribute to the Ca(2+) site. Residue Tyr12 coordinates a carbohydrate. Residues Asp19 and His24 each contribute to the Mn(2+) site. 99-100 is a binding site for a carbohydrate; it reads LY. Asp208 contributes to the Ca(2+) binding site. Arg228 is a binding site for a carbohydrate.

Belongs to the leguminous lectin family. In terms of assembly, homotetramer.

Its function is as follows. Glucose/D-mannose specific lectin. The sequence is that of Concanavalin-A from Canavalia lineata (Beach bean).